Consider the following 187-residue polypeptide: Oligoribonuclease (187 aa).

The Exonuclease domain maps to 7–170 (LCWLDMEMTG…DDILESIEEM (164 aa)). Tyrosine 128 is an active-site residue.

It belongs to the oligoribonuclease family.

The protein localises to the cytoplasm. Its function is as follows. 3'-to-5' exoribonuclease specific for small oligoribonucleotides. The polypeptide is Oligoribonuclease (Neisseria meningitidis serogroup A / serotype 4A (strain DSM 15465 / Z2491)).